Reading from the N-terminus, the 862-residue chain is MKTVLMVAEKPSLAQSIAKILSRGNMSSHKGLNGACSVHKYTGTFAGQPVHFKMTSVCGHVMTLDFLGKYNKWDKVDPAELFSQAPTEKKEANPKLNMVKFLQVEGRGCDYVVLWLDCDKEGENICFEVLDAVLPVMNNAHNGEKTVFRARFSSITDTDICNAMTRLSEPDHNEALSVDARQELDLRIGCAFTRFQTKYFQGKYGDLDSSLISFGPCQTPTLGFCVERHDKIQSFKPETYWVLQAKVHTDKEESLLLDWDRVRVFDWEIAQMFLNMTKLEKEAWVEATSRKEKAKQRPLALNTVEMLRVASSALGMGPQHAMQIAERLYTQGYISYPRTETTHYPENFDLKGSLRQQANHPYWADSVKQLLAEGINRPRKGHDAGDHPPITPMKSATEAELGGDAWRLYEYITRHFIATVSHDCKYLQSTISFRIGPEHFTCMGKTVISPGFTEIMPWQSVPLEESLPTCQKGDTFTVGEVKMLEKQTSPPDYLTEAELITLMEKHGIGTDASIPVHINNICQRNYVTVESGRRLKPTNLGIVLVHGYYKIDAELVLPTIRSAVEKQLNLIAQGKADYHQVLGHTLDIFKRKFHYFVDSIAGMDELMEVSFSPLAATGKPLSRCGKCHRFMKYIQAKPSRLHCSHCDETYTLPQNGTIKLYKELRCPLDDFELVLWSSGSRGKSYPLCPYCYNHPPFRDMKKGMGCNECTHPTCQHSLSMLGIGQCVECENGVLVLDPTSGPKWKVACNTCNVVAHCFENAHRVRVSADTCNTCEAALLDVDFNKAKSPLPGNETQHTGCIFCDPVFQELVELKHAASCHPMHRGGPGRRQGRGRGRGRRPPGKPNPRRPKDKMSALAAYFV.

Residues 3-153 (TVLMVAEKPS…EKTVFRARFS (151 aa)) enclose the Toprim domain. The 423-residue stretch at 171–593 (DHNEALSVDA…HTLDIFKRKF (423 aa)) folds into the Topo IA-type catalytic domain. Y336 (O-(5'-phospho-DNA)-tyrosine intermediate) is an active-site residue. Positions 820-855 (HPMHRGGPGRRQGRGRGRGRRPPGKPNPRRPKDKMS) are disordered. Residues 821 to 851 (PMHRGGPGRRQGRGRGRGRRPPGKPNPRRPK) show a composition bias toward basic residues.

This sequence belongs to the type IA topoisomerase family. Highly expressed in testis.

It catalyses the reaction ATP-independent breakage of single-stranded DNA, followed by passage and rejoining.. Functionally, releases the supercoiling and torsional tension of DNA introduced during the DNA replication and transcription by transiently cleaving and rejoining one strand of the DNA duplex. Introduces a single-strand break via transesterification at a target site in duplex DNA. The scissile phosphodiester is attacked by the catalytic tyrosine of the enzyme, resulting in the formation of a DNA-(5'-phosphotyrosyl)-enzyme intermediate and the expulsion of a 3'-OH DNA strand. The free DNA strand than undergoes passage around the unbroken strand thus removing DNA supercoils. Finally, in the religation step, the DNA 3'-OH attacks the covalent intermediate to expel the active-site tyrosine and restore the DNA phosphodiester backbone. Possesses negatively supercoiled DNA relaxing activity. This Mus musculus (Mouse) protein is DNA topoisomerase 3-beta-1 (Top3b).